A 230-amino-acid chain; its full sequence is MDLLPFLLDANLSATNPPAIPHWWKRQPLIPNLLSQELKNYLKLNAKEKNVQIADQVIIDESAGEVVIGANTRICHGAVIQGPVVIGANCLIGNYAFIRPGTIISNGVKIGFATEIKNAVIEAEATIGPQCFIADSVVANQAYLGAQVRTSNHRLDEQPVSVRTPEGIIATGCDKLGCYIGKRSRLGVQVIILPGRIISPNTQLGPRVIVERNLPSGTYSLRQELIRTGD.

Belongs to the transferase hexapeptide repeat family.

This is an uncharacterized protein from Escherichia coli O6:K15:H31 (strain 536 / UPEC).